We begin with the raw amino-acid sequence, 316 residues long: Protoheme IX farnesyltransferase (316 aa).

9 helical membrane-spanning segments follow: residues W28–M48, I57–I77, A106–T126, L129–L149, N156–M176, M179–W199, I230–V250, Y254–M274, and Y296–G316.

This sequence belongs to the UbiA prenyltransferase family. Protoheme IX farnesyltransferase subfamily.

The protein resides in the cell inner membrane. It carries out the reaction heme b + (2E,6E)-farnesyl diphosphate + H2O = Fe(II)-heme o + diphosphate. The protein operates within porphyrin-containing compound metabolism; heme O biosynthesis; heme O from protoheme: step 1/1. Converts heme B (protoheme IX) to heme O by substitution of the vinyl group on carbon 2 of heme B porphyrin ring with a hydroxyethyl farnesyl side group. This is Protoheme IX farnesyltransferase from Gluconobacter oxydans (strain 621H) (Gluconobacter suboxydans).